Here is a 245-residue protein sequence, read N- to C-terminus: DNA repair protein RecO (245 aa).

The protein belongs to the RecO family.

Functionally, involved in DNA repair and RecF pathway recombination. The polypeptide is DNA repair protein RecO (Klebsiella pneumoniae subsp. pneumoniae (strain ATCC 700721 / MGH 78578)).